A 315-amino-acid chain; its full sequence is UDP-N-acetylenolpyruvoylglucosamine reductase (315 aa).

One can recognise an FAD-binding PCMH-type domain in the interval 27 to 207 (RVGGPADVLY…TKRMNAITAR (181 aa)). Residue Arg172 is part of the active site. Positions 214 to 236 (IREKTSGSTFANPDPPGTPNQRK) are disordered. Ser221 acts as the Proton donor in catalysis. Glu297 is a catalytic residue.

This sequence belongs to the MurB family. FAD serves as cofactor.

Its subcellular location is the cytoplasm. It carries out the reaction UDP-N-acetyl-alpha-D-muramate + NADP(+) = UDP-N-acetyl-3-O-(1-carboxyvinyl)-alpha-D-glucosamine + NADPH + H(+). It functions in the pathway cell wall biogenesis; peptidoglycan biosynthesis. Cell wall formation. In Maricaulis maris (strain MCS10) (Caulobacter maris), this protein is UDP-N-acetylenolpyruvoylglucosamine reductase.